A 445-amino-acid polypeptide reads, in one-letter code: Argininosuccinate synthase (445 aa).

ATP contacts are provided by residues 17–25 and Ala43; that span reads AFSGGLDTS. An L-citrulline-binding site is contributed by Tyr99. Gly129 and Thr131 together coordinate ATP. L-aspartate contacts are provided by Thr131, Asn135, and Asp136. Residue Asn135 participates in L-citrulline binding. Position 136 (Asp136) interacts with ATP. Positions 139 and 192 each coordinate L-citrulline. Position 194 (Asp194) interacts with ATP. Thr201, Glu203, and Glu280 together coordinate L-citrulline.

It belongs to the argininosuccinate synthase family. Type 2 subfamily. As to quaternary structure, homotetramer.

It localises to the cytoplasm. The catalysed reaction is L-citrulline + L-aspartate + ATP = 2-(N(omega)-L-arginino)succinate + AMP + diphosphate + H(+). It participates in amino-acid biosynthesis; L-arginine biosynthesis; L-arginine from L-ornithine and carbamoyl phosphate: step 2/3. This Polaromonas naphthalenivorans (strain CJ2) protein is Argininosuccinate synthase.